We begin with the raw amino-acid sequence, 215 residues long: 3-isopropylmalate dehydratase small subunit (215 aa).

This sequence belongs to the LeuD family. LeuD type 1 subfamily. As to quaternary structure, heterodimer of LeuC and LeuD.

It carries out the reaction (2R,3S)-3-isopropylmalate = (2S)-2-isopropylmalate. The protein operates within amino-acid biosynthesis; L-leucine biosynthesis; L-leucine from 3-methyl-2-oxobutanoate: step 2/4. Functionally, catalyzes the isomerization between 2-isopropylmalate and 3-isopropylmalate, via the formation of 2-isopropylmaleate. The protein is 3-isopropylmalate dehydratase small subunit of Xanthomonas euvesicatoria pv. vesicatoria (strain 85-10) (Xanthomonas campestris pv. vesicatoria).